The sequence spans 466 residues: Asparagine--tRNA ligase (466 aa).

This sequence belongs to the class-II aminoacyl-tRNA synthetase family. Homodimer.

The protein localises to the cytoplasm. The catalysed reaction is tRNA(Asn) + L-asparagine + ATP = L-asparaginyl-tRNA(Asn) + AMP + diphosphate + H(+). This is Asparagine--tRNA ligase from Escherichia coli O139:H28 (strain E24377A / ETEC).